The following is a 203-amino-acid chain: Pyrrolidone-carboxylate peptidase (203 aa).

Active-site residues include glutamate 78, cysteine 141, and histidine 165.

It belongs to the peptidase C15 family. As to quaternary structure, homotetramer.

The protein resides in the cytoplasm. It catalyses the reaction Release of an N-terminal pyroglutamyl group from a polypeptide, the second amino acid generally not being Pro.. In terms of biological role, removes 5-oxoproline from various penultimate amino acid residues except L-proline. This Thermoanaerobacter pseudethanolicus (strain ATCC 33223 / 39E) (Clostridium thermohydrosulfuricum) protein is Pyrrolidone-carboxylate peptidase.